The sequence spans 484 residues: Probable glycine dehydrogenase (decarboxylating) subunit 2 (484 aa).

Position 264 is an N6-(pyridoxal phosphate)lysine (lysine 264).

The protein belongs to the GcvP family. C-terminal subunit subfamily. As to quaternary structure, the glycine cleavage system is composed of four proteins: P, T, L and H. In this organism, the P 'protein' is a heterodimer of two subunits. Pyridoxal 5'-phosphate is required as a cofactor.

It carries out the reaction N(6)-[(R)-lipoyl]-L-lysyl-[glycine-cleavage complex H protein] + glycine + H(+) = N(6)-[(R)-S(8)-aminomethyldihydrolipoyl]-L-lysyl-[glycine-cleavage complex H protein] + CO2. Functionally, the glycine cleavage system catalyzes the degradation of glycine. The P protein binds the alpha-amino group of glycine through its pyridoxal phosphate cofactor; CO(2) is released and the remaining methylamine moiety is then transferred to the lipoamide cofactor of the H protein. This chain is Probable glycine dehydrogenase (decarboxylating) subunit 2, found in Legionella pneumophila (strain Corby).